The sequence spans 110 residues: Large ribosomal subunit protein uL22 (110 aa).

It belongs to the universal ribosomal protein uL22 family. Part of the 50S ribosomal subunit.

In terms of biological role, this protein binds specifically to 23S rRNA; its binding is stimulated by other ribosomal proteins, e.g. L4, L17, and L20. It is important during the early stages of 50S assembly. It makes multiple contacts with different domains of the 23S rRNA in the assembled 50S subunit and ribosome. The globular domain of the protein is located near the polypeptide exit tunnel on the outside of the subunit, while an extended beta-hairpin is found that lines the wall of the exit tunnel in the center of the 70S ribosome. The polypeptide is Large ribosomal subunit protein uL22 (Syntrophobacter fumaroxidans (strain DSM 10017 / MPOB)).